The chain runs to 74 residues: Cytochrome c oxidase subunit 2 (74 aa).

The Mitochondrial intermembrane portion of the chain corresponds to 1–14 (MAHPSQLGLQDAAS). A helical transmembrane segment spans residues 15 to 45 (PVMEELLHFHDHALMIVFLISTLVLYIIVAM). Topologically, residues 46-74 (VSTKLTDKYTIDSQEIEIVWTVLPAVILI) are mitochondrial matrix.

This sequence belongs to the cytochrome c oxidase subunit 2 family. In terms of assembly, component of the cytochrome c oxidase (complex IV, CIV), a multisubunit enzyme composed of 14 subunits. The complex is composed of a catalytic core of 3 subunits MT-CO1, MT-CO2 and MT-CO3, encoded in the mitochondrial DNA, and 11 supernumerary subunits COX4I, COX5A, COX5B, COX6A, COX6B, COX6C, COX7A, COX7B, COX7C, COX8 and NDUFA4, which are encoded in the nuclear genome. The complex exists as a monomer or a dimer and forms supercomplexes (SCs) in the inner mitochondrial membrane with NADH-ubiquinone oxidoreductase (complex I, CI) and ubiquinol-cytochrome c oxidoreductase (cytochrome b-c1 complex, complex III, CIII), resulting in different assemblies (supercomplex SCI(1)III(2)IV(1) and megacomplex MCI(2)III(2)IV(2)). Found in a complex with TMEM177, COA6, COX18, COX20, SCO1 and SCO2. Interacts with TMEM177 in a COX20-dependent manner. Interacts with COX20. Interacts with COX16. Cu cation is required as a cofactor.

It localises to the mitochondrion inner membrane. It carries out the reaction 4 Fe(II)-[cytochrome c] + O2 + 8 H(+)(in) = 4 Fe(III)-[cytochrome c] + 2 H2O + 4 H(+)(out). Its function is as follows. Component of the cytochrome c oxidase, the last enzyme in the mitochondrial electron transport chain which drives oxidative phosphorylation. The respiratory chain contains 3 multisubunit complexes succinate dehydrogenase (complex II, CII), ubiquinol-cytochrome c oxidoreductase (cytochrome b-c1 complex, complex III, CIII) and cytochrome c oxidase (complex IV, CIV), that cooperate to transfer electrons derived from NADH and succinate to molecular oxygen, creating an electrochemical gradient over the inner membrane that drives transmembrane transport and the ATP synthase. Cytochrome c oxidase is the component of the respiratory chain that catalyzes the reduction of oxygen to water. Electrons originating from reduced cytochrome c in the intermembrane space (IMS) are transferred via the dinuclear copper A center (CU(A)) of subunit 2 and heme A of subunit 1 to the active site in subunit 1, a binuclear center (BNC) formed by heme A3 and copper B (CU(B)). The BNC reduces molecular oxygen to 2 water molecules using 4 electrons from cytochrome c in the IMS and 4 protons from the mitochondrial matrix. The protein is Cytochrome c oxidase subunit 2 (mt-co2) of Megalops atlanticus (Tarpon).